A 331-amino-acid polypeptide reads, in one-letter code: Pectinesterase (331 aa).

Positions 1–17 (MVKSILASVLFAATALA) are cleaved as a signal peptide. Glutamine 138 contributes to the substrate binding site. The active-site Proton donor is aspartate 161. Aspartate 182 serves as the catalytic Nucleophile. Positions 247 and 249 each coordinate substrate.

It belongs to the pectinesterase family.

The protein localises to the secreted. It catalyses the reaction [(1-&gt;4)-alpha-D-galacturonosyl methyl ester](n) + n H2O = [(1-&gt;4)-alpha-D-galacturonosyl](n) + n methanol + n H(+). It functions in the pathway glycan metabolism; pectin degradation; 2-dehydro-3-deoxy-D-gluconate from pectin: step 1/5. Involved in maceration and soft-rotting of plant tissue. In Aspergillus niger, this protein is Pectinesterase (pme1).